Reading from the N-terminus, the 373-residue chain is Glycerol-3-phosphate dehydrogenase [NAD(+)] 2 (373 aa).

A Phosphoserine modification is found at S15. NAD(+) is bound by residues G31–G36, F123, K146, and A179. Position 146 (K146) interacts with substrate. K236 serves as the catalytic Proton acceptor. R300 and Q329 together coordinate NAD(+). R300 to N301 provides a ligand contact to substrate.

The protein belongs to the NAD-dependent glycerol-3-phosphate dehydrogenase family.

The protein localises to the cytoplasm. It carries out the reaction sn-glycerol 3-phosphate + NAD(+) = dihydroxyacetone phosphate + NADH + H(+). The sequence is that of Glycerol-3-phosphate dehydrogenase [NAD(+)] 2 (gpd2) from Schizosaccharomyces pombe (strain 972 / ATCC 24843) (Fission yeast).